A 580-amino-acid polypeptide reads, in one-letter code: Glypican-3 (580 aa).

Positions 1-24 (MAGTVRTACLVVAMLLSLDFPGQA) are cleaved as a signal peptide. At Q25 the chain carries Pyrrolidone carboxylic acid. 7 cysteine pairs are disulfide-bonded: C35-C72, C65-C262, C73-C265, C197-C349, C252-C285, C274-C422, and C278-C410. N-linked (GlcNAc...) asparagine glycosylation is found at N124 and N241. S352 bears the Phosphoserine; by FAM20C mark. A glycan (N-linked (GlcNAc...) asparagine) is linked at N418. O-linked (Xyl...) (glycosaminoglycan) serine glycans are attached at residues S495 and S509. N554 carries the GPI-anchor amidated asparagine lipid modification. The propeptide at 555-580 (LGNVHSPLKLLTSMAISVVCFFFLVH) is removed in mature form.

This sequence belongs to the glypican family. Heterodimer; disulfide-linked. Cleavage by a furin-like convertase results in production of alpha and beta chains which form a disulfide-linked heterodimer. Interacts with DPP4. Interacts with FGF2. Interacts with WNT5A. Also interacts with WNT3A and WNT7B. Interacts with hedgehog protein SHH; the heparan sulfate chains are not required for the interaction. Also interacts with hedgehog protein IHH. Interacts with CD81. Interacts with Wnt receptors FZD4, FZD7 and FZD8; the heparan sulfate chains are required for the interaction. O-glycosylated; contains heparan sulfate and/or chondroitin sulfate. In terms of processing, cleaved intracellularly by a furin-like convertase to generate 2 subunits, alpha and beta, which remain associated through disulfide bonds and are associated with the cell surface via the GPI-anchor. This processing is essential for its role in inhibition of hedgehog signaling. A second proteolytic event may result in cleavage of the protein on the cell surface, separating it from the GPI-anchor and leading to its shedding from the cell surface. As to expression, detected in placenta (at protein level). Highly expressed in lung, liver and kidney.

The protein localises to the cell membrane. In terms of biological role, cell surface proteoglycan. Negatively regulates the hedgehog signaling pathway when attached via the GPI-anchor to the cell surface by competing with the hedgehog receptor PTC1 for binding to hedgehog proteins. Binding to the hedgehog protein SHH triggers internalization of the complex by endocytosis and its subsequent lysosomal degradation. Positively regulates the canonical Wnt signaling pathway by binding to the Wnt receptor Frizzled and stimulating the binding of the Frizzled receptor to Wnt ligands. Positively regulates the non-canonical Wnt signaling pathway. Binds to CD81 which decreases the availability of free CD81 for binding to the transcriptional repressor HHEX, resulting in nuclear translocation of HHEX and transcriptional repression. Inhibits the dipeptidyl peptidase activity of DPP4. Plays a role in limb patterning and skeletal development by controlling the cellular response to BMP4. Modulates the effects of growth factors BMP2, BMP7 and FGF7 on renal branching morphogenesis. Required for coronary vascular development. Plays a role in regulating cell movements during gastrulation. This Homo sapiens (Human) protein is Glypican-3 (GPC3).